A 152-amino-acid chain; its full sequence is Arginine repressor (152 aa).

Belongs to the ArgR family.

It is found in the cytoplasm. Its pathway is amino-acid biosynthesis; L-arginine biosynthesis [regulation]. In terms of biological role, regulates arginine biosynthesis genes. The chain is Arginine repressor from Thermotoga sp. (strain RQ2).